The sequence spans 324 residues: CYFIP-related Rac1 interactor B (324 aa).

Residue G2 is the site of N-myristoyl glycine attachment. A Glycyl lysine isopeptide (Lys-Gly) (interchain with G-Cter in ubiquitin) cross-link involves residue K74.

This sequence belongs to the CYRI family. Interacts with RAC1 (GTP-bound form preferentially). Ubiquitinated at Lys-74 upon Salmonella bacterial infection.

It is found in the membrane. It localises to the mitochondrion. Its function is as follows. Negatively regulates RAC1 signaling and RAC1-driven cytoskeletal remodeling. Regulates chemotaxis, cell migration and epithelial polarization by controlling the polarity, plasticity, duration and extent of protrusions. Limits Rac1 mediated activation of the Scar/WAVE complex, focuses protrusion signals and regulates pseudopod complexity by inhibiting Scar/WAVE-induced actin polymerization. Protects against Salmonella bacterial infection. Attenuates processes such as macropinocytosis, phagocytosis and cell migration and restrict sopE-mediated bacterial entry. Also restricts infection mediated by Mycobacterium tuberculosis and Listeria monocytogenes. Involved in the regulation of mitochondrial dynamics and oxidative stress. This is CYFIP-related Rac1 interactor B from Homo sapiens (Human).